Reading from the N-terminus, the 848-residue chain is Leucine--tRNA ligase (848 aa).

Positions 1-16 are enriched in basic and acidic residues; that stretch reads MCPEQPHDTRAERDEM. The disordered stretch occupies residues 1–30; that stretch reads MCPEQPHDTRAERDEMSEQTQQAAQPAETA. A compositionally biased stretch (low complexity) spans 18–30; that stretch reads EQTQQAAQPAETA. Positions 69–79 match the 'HIGH' region motif; the sequence is PYPSGDLHMGH. The 'KMSKS' region signature appears at 614–618; the sequence is KMSKS. Residue Lys-617 participates in ATP binding.

This sequence belongs to the class-I aminoacyl-tRNA synthetase family.

It is found in the cytoplasm. It carries out the reaction tRNA(Leu) + L-leucine + ATP = L-leucyl-tRNA(Leu) + AMP + diphosphate. This Nocardioides sp. (strain ATCC BAA-499 / JS614) protein is Leucine--tRNA ligase.